The following is a 61-amino-acid chain: uncharacterized protein (61 aa).

This is an uncharacterized protein from Staphylococcus epidermidis.